The chain runs to 623 residues: UvrABC system protein C (623 aa).

One can recognise a GIY-YIG domain in the interval 28-105 (GAPGVYRMLD…IKQLKPKYNV (78 aa)). In terms of domain architecture, UVR spans 215 to 250 (TRVQEELAEQMMAASEAMEFERAAALRDRIRALTTV).

The protein belongs to the UvrC family. As to quaternary structure, interacts with UvrB in an incision complex.

It is found in the cytoplasm. The UvrABC repair system catalyzes the recognition and processing of DNA lesions. UvrC both incises the 5' and 3' sides of the lesion. The N-terminal half is responsible for the 3' incision and the C-terminal half is responsible for the 5' incision. The sequence is that of UvrABC system protein C from Ruegeria pomeroyi (strain ATCC 700808 / DSM 15171 / DSS-3) (Silicibacter pomeroyi).